The primary structure comprises 444 residues: D(2) dopamine receptor (444 aa).

Over 1–37 the chain is Extracellular; sequence MDPLNLSWYDDDPESRNWSRPFNGSEGKADRPPYNYY. N-linked (GlcNAc...) asparagine glycans are attached at residues asparagine 5, asparagine 17, and asparagine 23. The helical transmembrane segment at 38–60 threads the bilayer; the sequence is AMLLTLLIFVIVFGNVLVCMAVS. At 61 to 70 the chain is on the cytoplasmic side; the sequence is REKALQTTTN. The helical transmembrane segment at 71-93 threads the bilayer; that stretch reads YLIVSLAVADLLVATLVMPWVVY. Topologically, residues 94–108 are extracellular; it reads LEVVGEWKFSRIHCD. An intrachain disulfide couples cysteine 107 to cysteine 182. Residues 109–130 traverse the membrane as a helical segment; the sequence is IFVTLDVMMCTASILNLCAISI. At 131-151 the chain is on the cytoplasmic side; the sequence is DRYTAVAMPMLYNTRYSSKRR. A helical membrane pass occupies residues 152–172; the sequence is VTVMIAIVWVLSFTISCPMLF. Over 173–188 the chain is Extracellular; sequence GLNNTDQNECIIANPA. A helical transmembrane segment spans residues 189–213; it reads FVVYSSIVSFYVPFIVTLLVYIKIY. The tract at residues 211–374 is interaction with PPP1R9B; it reads KIYIVLRRRR…SQQKEKKATQ (164 aa). Residues 214 to 374 lie on the Cytoplasmic side of the membrane; the sequence is IVLRRRRKRV…SQQKEKKATQ (161 aa). The disordered stretch occupies residues 281–332; it reads MEMLSSTSPPERTRYSPIPPSHHQLTLPDPSHHGLHSTPDSPAKPEKNGHAK. Residues 375-396 traverse the membrane as a helical segment; that stretch reads MLAIVLGVFIICWLPFFITHIL. At 397 to 410 the chain is on the extracellular side; the sequence is NIHCDCNIPPVLYS. An intrachain disulfide couples cysteine 400 to cysteine 402. The chain crosses the membrane as a helical span at residues 411–432; it reads AFTWLGYVNSAVNPIIYTTFNI. At 433 to 444 the chain is on the cytoplasmic side; that stretch reads EFRKAFLKILHC. Residue cysteine 444 is the site of S-palmitoyl cysteine attachment.

It belongs to the G-protein coupled receptor 1 family. Forms homo- and heterooligomers with DRD4. The interaction with DRD4 may modulate agonist-induced downstream signaling. Interacts with CADPS and CADPS2. Interacts with GPRASP1, PPP1R9B and CLIC6. Interacts with ARRB2. Interacts with HTR2A. Interacts with DRD1. Interacts with KCNA2. In terms of processing, palmitoylated. Palmitoylation which is required for proper localization to the plasma membrane and stability of the receptor could be carried on by ZDHHC4, ZDHHC3 and ZDHHC8.

It localises to the cell membrane. The protein resides in the golgi apparatus membrane. Functionally, dopamine receptor whose activity is mediated by G proteins which inhibit adenylyl cyclase. Positively regulates postnatal regression of retinal hyaloid vessels via suppression of VEGFR2/KDR activity, downstream of OPN5. This chain is D(2) dopamine receptor (DRD2), found in Bos taurus (Bovine).